Reading from the N-terminus, the 333-residue chain is Tetraacyldisaccharide 4'-kinase (333 aa).

Ser55 to Thr62 serves as a coordination point for ATP.

Belongs to the LpxK family.

The enzyme catalyses a lipid A disaccharide + ATP = a lipid IVA + ADP + H(+). It functions in the pathway glycolipid biosynthesis; lipid IV(A) biosynthesis; lipid IV(A) from (3R)-3-hydroxytetradecanoyl-[acyl-carrier-protein] and UDP-N-acetyl-alpha-D-glucosamine: step 6/6. Transfers the gamma-phosphate of ATP to the 4'-position of a tetraacyldisaccharide 1-phosphate intermediate (termed DS-1-P) to form tetraacyldisaccharide 1,4'-bis-phosphate (lipid IVA). This Aeromonas hydrophila subsp. hydrophila (strain ATCC 7966 / DSM 30187 / BCRC 13018 / CCUG 14551 / JCM 1027 / KCTC 2358 / NCIMB 9240 / NCTC 8049) protein is Tetraacyldisaccharide 4'-kinase.